The chain runs to 449 residues: Mannan endo-1,6-alpha-mannosidase DCW1 (449 aa).

The signal sequence occupies residues 1-21; sequence MLVNKVIGLLGVLFATRFTNA. 12 N-linked (GlcNAc...) asparagine glycosylation sites follow: Asn34, Asn84, Asn109, Asn133, Asn203, Asn225, Asn240, Asn265, Asn281, Asn337, Asn362, and Asn420. Gly428 is lipidated: GPI-anchor amidated glycine. The propeptide at 429 to 449 is removed in mature form; that stretch reads AGIITAVIGISIVACALWLVF.

The protein belongs to the glycosyl hydrolase 76 family.

It localises to the cell membrane. It carries out the reaction Random hydrolysis of (1-&gt;6)-alpha-D-mannosidic linkages in unbranched (1-&gt;6)-mannans.. Functionally, required for normal synthesis of the cell wall. This is Mannan endo-1,6-alpha-mannosidase DCW1 (DCW1) from Saccharomyces cerevisiae (strain ATCC 204508 / S288c) (Baker's yeast).